Consider the following 806-residue polypeptide: G-type lectin S-receptor-like serine/threonine-protein kinase At1g61430 (806 aa).

The signal sequence occupies residues 1–24 (MGKKRIVFFAYLPFFTIFMSFSFA). The Bulb-type lectin domain occupies 25–144 (GITKESPFSI…VSGRTLWQSF (120 aa)). Over 25–425 (GITKESPFSI…ELDVNKRKMT (401 aa)) the chain is Extracellular. Asn-53, Asn-94, Asn-117, and Asn-236 each carry an N-linked (GlcNAc...) asparagine glycan. The 37-residue stretch at 277 to 313 (PANSCDIYGVCGPFGLCVVSIPPKCKCFKGFVPKFAK) folds into the EGF-like domain. 2 cysteine pairs are disulfide-bonded: Cys-281/Cys-293 and Cys-287/Cys-301. 3 N-linked (GlcNAc...) asparagine glycosylation sites follow: Asn-319, Asn-335, and Asn-374. The PAN domain maps to 332 to 414 (CQGNSSGKDA…GELLSIRLAR (83 aa)). 2 disulfide bridges follow: Cys-367–Cys-388 and Cys-371–Cys-377. A helical membrane pass occupies residues 426 to 446 (IVASTVSLTLFVIFGFAAFGF). Topologically, residues 447–806 (WRCRVEHNAH…EMTESVIQGR (360 aa)) are cytoplasmic. Positions 489-777 (FSLSNKLGPG…DLPLPKKPTF (289 aa)) constitute a Protein kinase domain. ATP-binding positions include 495–503 (LGPGGFGSV) and Lys-520. Phosphoserine is present on residues Ser-526 and Ser-541. The interval 581-598 (RKKLELDWPKRFEIIEGI) is caM-binding. Asp-617 serves as the catalytic Proton acceptor. 2 positions are modified to phosphoserine: Ser-621 and Ser-634. Residue Thr-651 is modified to Phosphothreonine. Ser-694, Ser-695, and Ser-788 each carry phosphoserine.

Belongs to the protein kinase superfamily. Ser/Thr protein kinase family.

It is found in the cell membrane. It carries out the reaction L-seryl-[protein] + ATP = O-phospho-L-seryl-[protein] + ADP + H(+). It catalyses the reaction L-threonyl-[protein] + ATP = O-phospho-L-threonyl-[protein] + ADP + H(+). This chain is G-type lectin S-receptor-like serine/threonine-protein kinase At1g61430, found in Arabidopsis thaliana (Mouse-ear cress).